Consider the following 418-residue polypeptide: Glutamyl-tRNA reductase (418 aa).

Residues 51-54 (TCNR), S107, 112-114 (EPQ), and Q118 contribute to the substrate site. C52 (nucleophile) is an active-site residue. 187-192 (GAGETA) serves as a coordination point for NADP(+).

This sequence belongs to the glutamyl-tRNA reductase family. As to quaternary structure, homodimer.

It carries out the reaction (S)-4-amino-5-oxopentanoate + tRNA(Glu) + NADP(+) = L-glutamyl-tRNA(Glu) + NADPH + H(+). Its pathway is porphyrin-containing compound metabolism; protoporphyrin-IX biosynthesis; 5-aminolevulinate from L-glutamyl-tRNA(Glu): step 1/2. Catalyzes the NADPH-dependent reduction of glutamyl-tRNA(Glu) to glutamate 1-semialdehyde (GSA). In Dichelobacter nodosus (strain VCS1703A), this protein is Glutamyl-tRNA reductase.